We begin with the raw amino-acid sequence, 321 residues long: Glucokinase (321 aa).

8–13 contributes to the ATP binding site; that stretch reads GDVGGT.

Belongs to the bacterial glucokinase family.

The protein localises to the cytoplasm. It catalyses the reaction D-glucose + ATP = D-glucose 6-phosphate + ADP + H(+). This Psychromonas ingrahamii (strain DSM 17664 / CCUG 51855 / 37) protein is Glucokinase.